A 299-amino-acid chain; its full sequence is UDP-N-acetylenolpyruvoylglucosamine reductase (299 aa).

Residues 29 to 193 enclose the FAD-binding PCMH-type domain; sequence RIGGPAEIFL…TAASLRFRKA (165 aa). The active site involves arginine 173. The active-site Proton donor is serine 222. Glutamate 292 is an active-site residue.

Belongs to the MurB family. The cofactor is FAD.

Its subcellular location is the cytoplasm. It carries out the reaction UDP-N-acetyl-alpha-D-muramate + NADP(+) = UDP-N-acetyl-3-O-(1-carboxyvinyl)-alpha-D-glucosamine + NADPH + H(+). Its pathway is cell wall biogenesis; peptidoglycan biosynthesis. Its function is as follows. Cell wall formation. This is UDP-N-acetylenolpyruvoylglucosamine reductase from Syntrophotalea carbinolica (strain DSM 2380 / NBRC 103641 / GraBd1) (Pelobacter carbinolicus).